A 512-amino-acid chain; its full sequence is 2,3-bisphosphoglycerate-independent phosphoglycerate mutase (512 aa).

Residues Asp-13 and Ser-63 each contribute to the Mn(2+) site. Ser-63 acts as the Phosphoserine intermediate in catalysis. Substrate-binding positions include His-124, 154-155, Arg-186, Arg-192, 262-265, and Lys-337; these read RD and RPDR. Mn(2+) contacts are provided by Asp-404, His-408, Asp-445, His-446, and His-463.

The protein belongs to the BPG-independent phosphoglycerate mutase family. Monomer. It depends on Mn(2+) as a cofactor.

The enzyme catalyses (2R)-2-phosphoglycerate = (2R)-3-phosphoglycerate. It functions in the pathway carbohydrate degradation; glycolysis; pyruvate from D-glyceraldehyde 3-phosphate: step 3/5. In terms of biological role, essential for rapid growth and for sporulation. Catalyzes the interconversion of 2-phosphoglycerate and 3-phosphoglycerate. The chain is 2,3-bisphosphoglycerate-independent phosphoglycerate mutase from Oceanobacillus iheyensis (strain DSM 14371 / CIP 107618 / JCM 11309 / KCTC 3954 / HTE831).